A 243-amino-acid polypeptide reads, in one-letter code: Adenylate dimethylallyltransferase (243 aa).

It carries out the reaction dimethylallyl diphosphate + AMP = N(6)-(dimethylallyl)adenosine 5'-phosphate + diphosphate. Its function is as follows. Transfers dimethylallyl groups to AMP as part of the biosynthesis of cytokinin phytohormones. The polypeptide is Adenylate dimethylallyltransferase (tzs) (Agrobacterium fabrum (strain C58 / ATCC 33970) (Agrobacterium tumefaciens (strain C58))).